The chain runs to 215 residues: Protein C' (215 aa).

A disordered region spans residues 12-34 (MPSFLKKILKLRGRRQEDESRSR). Residues 15–22 (FLKKILKL) are involved in self-degradation and in host STAT1 degradation. The span at 25 to 35 (RRQEDESRSRM) shows a compositional bias: basic and acidic residues. Residues 36-66 (LSDSSTQSYQVNQLTSEETEAGSTIPSTPSK) show a composition bias toward polar residues.

This sequence belongs to the respirovirus protein C family. In terms of assembly, the different isoforms interact (via C-terminus) with unphosphorylated and phosphorylated human STAT1 (via N-terminus), favoring the formation of parallel STAT1 homodimers. The different isoforms do not interact with host STAT2. C protein interacts with L protein; this interaction has an inhibitory effect on viral transcription and replication. Protein Y1 is produced not only by alternative initiation, but also by proteolytic cleavage of C'. Only alternative initiation is detected in vitro, whereas in vivo cleavage seems to be predominant.

Its subcellular location is the host cytoplasm. Its function is as follows. The different products prevent the establishment of cellular antiviral state by blocking the interferon-alpha/beta (IFN-alpha/beta) and IFN-gamma signaling pathways. They inhibit IFN-alpha/beta induced tyrosine phosphorylation of STAT1 and STAT2. Blocking the IFN-alpha/beta pathway requires binding to STAT1 in the cytoplasm. They inhibit IFN-gamma induced serine phosphorylation of STAT1. Block the IFN-gamma pathway by binding to and stabilizing the parallel form of the STAT1 dimer, further inducing high-molecular-weight complex formation and inhibition of transcription by IFN-gamma. May also have a role in preventing the cell to enter apoptosis. Modulate regulation of viral transcription and replication. Overexpression inhibits the viral RNA polymerase. The absence of all C', C and Y1 proteins leads to viral delayed growth. Plays an important role in virion particles release. Modulates virion shape. The chain is Protein C' (P/V/C) from Cavia cutleri (Guinea pig).